Reading from the N-terminus, the 438-residue chain is Telomeric repeat-binding factor 1 (438 aa).

A compositionally biased stretch (polar residues) spans 1–10; that stretch reads MAEDVSSTAP. The interval 1–36 is disordered; the sequence is MAEDVSSTAPSPRGCADGRDADPTEEQMAQTQRNDQ. The residue at position 2 (Ala-2) is an N-acetylalanine. Residue Ser-11 is modified to Phosphoserine. The interval 58–268 is TRFH dimerization; the sequence is EEEEEDSGLV…AAAKVVESKR (211 aa). Lys-213 is covalently cross-linked (Glycyl lysine isopeptide (Lys-Gly) (interchain with G-Cter in SUMO2)). Position 219 is a phosphoserine; by ATM (Ser-219). Residues 265 to 378 form an interaction with RLIM region; that stretch reads ESKRTRTITS…PVTPEKHRAR (114 aa). Residues 268–311 form a disordered region; that stretch reads RTRTITSQDKPSGNDVEMETEANLDTRKSVSDKQSAVTESSEGT. Residues 299-311 are compositionally biased toward polar residues; it reads DKQSAVTESSEGT. Residue Lys-325 forms a Glycyl lysine isopeptide (Lys-Gly) (interchain with G-Cter in SUMO2) linkage. The disordered stretch occupies residues 326–375; that stretch reads LQHGTQQQDLNKKERRVGTPQSTKKKKESRRATESRIPVSKSQPVTPEKH. Residues 337-356 carry the Nuclear localization signal motif; it reads KKERRVGTPQSTKKKKESRR. Residue Lys-366 forms a Glycyl lysine isopeptide (Lys-Gly) (interchain with G-Cter in SUMO2) linkage. One can recognise an HTH myb-type domain in the interval 375–432; it reads HRARKRQAWLWEEDKNLRSGVRKYGEGNWSKILLHYKFNNRTSVMLKDRWRTMKKLKL. The segment at residues 403–428 is a DNA-binding region (H-T-H motif); that stretch reads WSKILLHYKFNNRTSVMLKDRWRTMK.

As to quaternary structure, homodimer; can contain both isoforms. Found in a complex with POT1; TINF2 and TNKS1. Interacts with ATM, TINF2, TNKS1, TNKS2, PINX1, NEK2 and MAPRE1. Component of the shelterin complex (telosome) composed of TERF1, TERF2, TINF2, TERF2IP ACD and POT1. Interacts with RLIM (via N-terminus). Interacts with FBXO4. Interaction with TINF2 protects against interaction with FBXO4 and subsequent polyubiquitination and proteasomal degradation. Interacts with GNL3L; this interaction promotes homodimerization. Interacts with TIN2. Interactions with GNL3L and TIN2 are mutually exclusive. Interacts with RTEL1. Interacts with CCDC79/TERB1. Phosphorylated preferentially on Ser-219 in an ATM-dependent manner in response to ionizing DNA damage. Post-translationally, ADP-ribosylation by TNKS1 or TNKS2 diminishes its ability to bind to telomeric DNA. In terms of processing, ubiquitinated by RLIM/RNF12, leading to its degradation by the proteasome. Ubiquitinated by a SCF (SKP1-CUL1-F-box protein) ubiquitin-protein ligase complex, leading to its degradation by the proteasome.

Its subcellular location is the nucleus. The protein localises to the chromosome. It localises to the telomere. The protein resides in the cytoplasm. It is found in the cytoskeleton. Its subcellular location is the spindle. Functionally, binds the telomeric double-stranded 5'-TTAGGG-3' repeat and negatively regulates telomere length. Involved in the regulation of the mitotic spindle. Component of the shelterin complex (telosome) that is involved in the regulation of telomere length and protection. Shelterin associates with arrays of double-stranded 5'-TTAGGG-3' repeats added by telomerase and protects chromosome ends; without its protective activity, telomeres are no longer hidden from the DNA damage surveillance and chromosome ends are inappropriately processed by DNA repair pathways. This Cricetulus griseus (Chinese hamster) protein is Telomeric repeat-binding factor 1 (TERF1).